Here is a 478-residue protein sequence, read N- to C-terminus: Vitronectin (478 aa).

An N-terminal signal peptide occupies residues 1 to 19 (MAPLRPLLILALLAWVALA). The 44-residue stretch at 20 to 63 (DQESCKGRCTEGFNVDKKCQCDELCSYYQSCCTDYTAECKPQVT) folds into the SMB domain. Intrachain disulfides connect Cys24–Cys28, Cys24–Cys40, Cys28–Cys58, Cys38–Cys40, Cys38–Cys51, Cys44–Cys50, and Cys51–Cys58. The Cell attachment site signature appears at 64–66 (RGD). Position 69 is a phosphothreonine; by CK2; in vitro (Thr69). Tyr75 carries the post-translational modification Sulfotyrosine. Thr76 is modified (phosphothreonine; by CK2; in vitro). Tyr78 carries the sulfotyrosine modification. N-linked (GlcNAc...) (complex) asparagine glycosylation is present at Asn86. The interval 91–158 (EQVGGPSLTS…PPAEEELCSG (68 aa)) is disordered. Residues 97–112 (SLTSDLQAQSKGNPEQ) are compositionally biased toward polar residues. Phosphoserine occurs at positions 130 and 137. Residues 133-143 (EGIDSRPETLH) show a composition bias toward basic and acidic residues. Hemopexin repeat units follow at residues 158-202 (GKPF…VWGI), 203-250 (EGPI…FDGI), and 251-305 (PDNV…FEHF). A glycan (N-linked (GlcNAc...) asparagine) is linked at Asn169. N-linked (GlcNAc...) (complex) asparagine glycosylation is present at Asn242. Tyr282 is modified (sulfotyrosine). Cys293 and Cys430 are joined by a disulfide. The residue at position 312 (Ser312) is a Phosphoserine. Positions 362–395 (RPSLAKKQRFRHRNRKGYRSQRGHSRGRNQNSRR) are heparin-binding. Positions 364–398 (SLAKKQRFRHRNRKGYRSQRGHSRGRNQNSRRPSR) are disordered. Residues 365 to 388 (LAKKQRFRHRNRKGYRSQRGHSRG) show a composition bias toward basic residues. Ser397 is modified (phosphoserine; by PKA). A sulfotyrosine mark is found at Tyr417 and Tyr420. Residues 419 to 472 (DYRMDWLVPATCEPIQSVFFFSGDKYYRVNLRTRRVDTVDPPYPRSIAQYWLGC) form a Hemopexin 4 repeat.

In terms of assembly, exists in two forms: a single chain 75 kDa form (V75) and a clipped form composed of two chains (65 kDa and 10 kDa) (V65+V10) which are held together by a disulfide bond. Interacts with SERPINE1/PAI1, insulin and C1QBP. As to quaternary structure, (Microbial infection) Interacts (via hemopexin repeat 2) with P.falciparum (isolate CDC / Honduras) SERA5 P47 (via C-terminus); may form heterotetramers of two VTN and SERA5 P47 heterodimers; the interaction may protect merozoites from phagocytosis by host monocytes; VTN glycosylation appears to be dispensable for the interaction. Sulfated on tyrosine residues. In terms of processing, N- and O-glycosylated. Post-translationally, phosphorylation on Thr-69 and Thr-76 favors cell adhesion and spreading. It has been suggested that the active SMB domain may be permitted considerable disulfide bond heterogeneity or variability, thus two alternate disulfide patterns based on 3D structures are described with 1 disulfide bond conserved in both. In terms of processing, phosphorylation sites are present in the extracellular medium. Expressed in the retina pigment epithelium (at protein level). Expressed in plasma (at protein level). Expressed in serum (at protein level).

The protein localises to the secreted. The protein resides in the extracellular space. It is found in the parasitophorous vacuole. Functionally, vitronectin is a cell adhesion and spreading factor found in serum and tissues. Vitronectin interact with glycosaminoglycans and proteoglycans. Is recognized by certain members of the integrin family and serves as a cell-to-substrate adhesion molecule. Inhibitor of the membrane-damaging effect of the terminal cytolytic complement pathway. Its function is as follows. Somatomedin-B is a growth hormone-dependent serum factor with protease-inhibiting activity. The protein is Vitronectin (VTN) of Homo sapiens (Human).